Here is a 358-residue protein sequence, read N- to C-terminus: MKVGVALSGGVDSAVALYLLLKEGHEVKAFHMKTKEDEFFIRKEIKKKVCCSPSDTADAMRIAHFLGVEIEIVDVKEIFREKVIEPFKSDLLKGLTPNPCVHCNRFVKFGYLMDYVLNQGFDAFASGHYARIEFSEKYGRKVIKKGVDLKKDQSYFLARIEPWRIERLIFPNGIYTKEEIRKIAEEAGIHVAKKQESQDVCFIPDGSIENFLKDEGITLKEGDLITPEGEVVGRHFGYPLYTIGQRKGFKIEKFGRRYYVRGKIPEKNVVVVSDLEDVFFSGLIAEDPVWHVEVPEEFKCVCRVRKKSEEAPAVVKLRDNEVEVRFEKKVFAVTPGQIAAFYDGDTLLGGAIIKEGIR.

ATP-binding positions include Ala6–Ser13 and Met32. Cys103 functions as the Nucleophile in the catalytic mechanism. An intrachain disulfide couples Cys103 to Cys201. Residue Gly127 participates in ATP binding. Residues Lys151–Gln153 are interaction with tRNA. Residue Cys201 is the Cysteine persulfide intermediate of the active site.

The protein belongs to the MnmA/TRMU family.

It localises to the cytoplasm. The enzyme catalyses S-sulfanyl-L-cysteinyl-[protein] + uridine(34) in tRNA + AH2 + ATP = 2-thiouridine(34) in tRNA + L-cysteinyl-[protein] + A + AMP + diphosphate + H(+). Catalyzes the 2-thiolation of uridine at the wobble position (U34) of tRNA, leading to the formation of s(2)U34. The sequence is that of tRNA-specific 2-thiouridylase MnmA from Thermotoga petrophila (strain ATCC BAA-488 / DSM 13995 / JCM 10881 / RKU-1).